The primary structure comprises 123 residues: Transmembrane protein 254 (123 aa).

Transmembrane regions (helical) follow at residues 15-35 (LFWF…VFWP), 63-83 (NGYW…LVLC), and 95-115 (LLWF…LFAY).

The protein localises to the membrane. The polypeptide is Transmembrane protein 254 (Tmem254) (Rattus norvegicus (Rat)).